We begin with the raw amino-acid sequence, 456 residues long: Solute carrier family 49 member 4 homolog (456 aa).

Over 1–29 (MGLEWSSPGERQPLLFPGGPRSPRVFGRR) the chain is Cytoplasmic. Positions 14–15 (LL) match the Di-leucine motif; mediates lysosomal localization motif. Residues 30–50 (WLVLLLFSVLAFLQGLVWNSW) form a helical membrane-spanning segment. Over 51–67 (GPIQISARTAYKFSGLD) the chain is Lumenal. Residues 68-88 (IALLVLWGPIGFLPCFLFMWL) form a helical membrane-spanning segment. The Cytoplasmic portion of the chain corresponds to 89–95 (MDNRGLR). The chain crosses the membrane as a helical span at residues 96 to 116 (ITVLLTALLMVLGAGLRCVPV). Residues 117–123 (EDLAIRR) are Lumenal-facing. A helical transmembrane segment spans residues 124–144 (ILIHGGQLLNGFAGPTVMNAA). The Cytoplasmic segment spans residues 145-162 (PFLSTTWFAPDERATATA). A helical membrane pass occupies residues 163–183 (IASMLNYLGGACAFLVGPLVV). Residues 184–207 (PAPNSTSGLLLYSGSTDAIKDRIE) are Lumenal-facing. A glycan (N-linked (GlcNAc...) asparagine) is linked at N187. The chain crosses the membrane as a helical span at residues 208–228 (AVMYAEFGIIFVVFAAILAYF). Over 229–259 (PARPPVPPSVAAASRRLSYRTSIFRLLSNLR) the chain is Cytoplasmic. The helical transmembrane segment at 260–280 (FLLIVLAYAIPLGFYSGWIGV) threads the bilayer. Residues 281 to 292 (LDLILTPVHVTQ) lie on the Lumenal side of the membrane. Residues 293–313 (VDAGWVGFWSIVGGCVVGIAV) traverse the membrane as a helical segment. At 314–326 (GRFADSIRGVLKP) the chain is on the cytoplasmic side. Residues 327-347 (ILLLLFSGATLSATWFTLTFL) traverse the membrane as a helical segment. Topologically, residues 348–362 (SNVTHLPLTTATLYT) are lumenal. N349 is a glycosylation site (N-linked (GlcNAc...) asparagine). The helical transmembrane segment at 363–383 (SCILIGVFLNGTVPIFFELFV) threads the bilayer. Residues 384-392 (ETVYPIPEG) are Cytoplasmic-facing. The chain crosses the membrane as a helical span at residues 393–413 (IACGVVTFLSNIFMGVLLVFL). Residues 414–420 (TMYQMEL) lie on the Lumenal side of the membrane. The helical transmembrane segment at 421 to 441 (SWLNWCLTGSCFLSLFFIACF) threads the bilayer. Topologically, residues 442-456 (RESYDRLYLDVFVSV) are cytoplasmic.

Belongs to the major facilitator superfamily.

The protein localises to the lysosome membrane. The catalysed reaction is pyridoxine(out) + n H(+)(out) = pyridoxine(in) + n H(+)(in). Mediates H(+)-dependent pyridoxine transport. The protein is Solute carrier family 49 member 4 homolog (slc49a4) of Xenopus laevis (African clawed frog).